A 448-amino-acid polypeptide reads, in one-letter code: Protein arginine N-methyltransferase 2 (448 aa).

Interaction with ESR1 stretches follow at residues 1 to 289 and 145 to 287; these read MEAP…SALK and KESL…NLSA. The SH3 domain occupies 42 to 101; sequence LQPEEFVAIADYTATDETQLSFLRGEKILILRQTTADWWWGERAGCCGYIPANHLGKQLE. Arg73 and Arg84 each carry asymmetric dimethylarginine. Residues 95–219 form an interaction with RB1 region; that stretch reads HLGKQLEEYD…DVVLPEKVDV (125 aa). Positions 111–414 constitute an SAM-dependent MTase PRMT-type domain; that stretch reads DEEYFDSYGT…CCVTKKSGME (304 aa). 5 residues coordinate S-adenosyl-L-methionine: His124, Arg133, Gly157, Glu180, and Glu209. Residues Glu223 and Glu232 contribute to the active site.

This sequence belongs to the class I-like SAM-binding methyltransferase superfamily. Protein arginine N-methyltransferase family. As to quaternary structure, self-associates. Interacts with HNRNPUL1. Interacts with NFKBIA. Interacts with NCOA6 coactivator. Interacts (via SH3 domain) with PRMT8. Interacts with AR. Interacts with ESR1, ESR2, PGR, PPARG, RARA, RXRA and THRB. Interacts with RB1 and E2F1. As to expression, expressed in liver, pancreas, lung, brain, skeletal muscle, heart, muscle and fat.

The protein localises to the cytoplasm. It localises to the nucleus. The catalysed reaction is L-arginyl-[protein] + 2 S-adenosyl-L-methionine = N(omega),N(omega)-dimethyl-L-arginyl-[protein] + 2 S-adenosyl-L-homocysteine + 2 H(+). Arginine methyltransferase that methylates the guanidino nitrogens of arginyl residues in proteins such as STAT3, FBL, histone H4. May inhibit NF-kappa-B transcription, and promote apoptosis. Represses E2F1 transcriptional activity (in a RB1-dependent manner). Has a negative regulation effect on G1 to S transition of mitotic cell cycle. Involved in growth regulation. Acts as a coactivator (with NCOA2) of the androgen receptor (AR)-mediated transactivation. Acts as a coactivator (with estrogen) of estrogen receptor (ER)-mediated transactivation. Enhances PGR, PPARG, RARA-mediated transactivation. This is Protein arginine N-methyltransferase 2 (Prmt2) from Mus musculus (Mouse).